Here is a 579-residue protein sequence, read N- to C-terminus: Adenine deaminase (579 aa).

The protein belongs to the metallo-dependent hydrolases superfamily. Adenine deaminase family. The cofactor is Mn(2+).

It catalyses the reaction adenine + H2O + H(+) = hypoxanthine + NH4(+). This is Adenine deaminase from Listeria innocua serovar 6a (strain ATCC BAA-680 / CLIP 11262).